Reading from the N-terminus, the 179-residue chain is Translation initiation factor IF-3 (179 aa).

Belongs to the IF-3 family. Monomer.

It localises to the cytoplasm. Its function is as follows. IF-3 binds to the 30S ribosomal subunit and shifts the equilibrium between 70S ribosomes and their 50S and 30S subunits in favor of the free subunits, thus enhancing the availability of 30S subunits on which protein synthesis initiation begins. In Treponema pallidum (strain Nichols), this protein is Translation initiation factor IF-3.